The chain runs to 225 residues: Sugar fermentation stimulation protein homolog (225 aa).

This sequence belongs to the SfsA family.

The protein is Sugar fermentation stimulation protein homolog of Sulfolobus acidocaldarius (strain ATCC 33909 / DSM 639 / JCM 8929 / NBRC 15157 / NCIMB 11770).